A 312-amino-acid chain; its full sequence is Thioredoxin reductase (312 aa).

An FAD-binding site is contributed by 33–43 (EGFFSGIAGGQ). An intrachain disulfide couples C138 to C141. 283–292 (DVQDKYYRQA) is an FAD binding site.

It belongs to the class-II pyridine nucleotide-disulfide oxidoreductase family. Homodimer. The cofactor is FAD.

Its subcellular location is the cytoplasm. The catalysed reaction is [thioredoxin]-dithiol + NADP(+) = [thioredoxin]-disulfide + NADPH + H(+). This chain is Thioredoxin reductase (trxB), found in Chlamydia trachomatis serovar D (strain ATCC VR-885 / DSM 19411 / UW-3/Cx).